A 140-amino-acid chain; its full sequence is Extracellular globin-1 (140 aa).

The region spanning 1–140 is the Globin domain; it reads ECDVLERFKV…YDFIASGIKP (140 aa). Cysteine 2 and cysteine 130 are disulfide-bonded. Residue histidine 93 participates in heme b binding.

It belongs to the globin family. As to quaternary structure, the giant hemoglobins of worms are formed of a monomeric subunit and a disulfide-bonded trimer. This subunit is monomeric.

It is found in the secreted. This chain is Extracellular globin-1, found in Metaphire hilgendorfi (Earthworm).